A 428-amino-acid polypeptide reads, in one-letter code: MQKIEYIIITKLWVGDCMEELARDKERAILVAIISSPEDEETLNELKELAVTAGAEVIGILTQKKKGINKAHYIGKGKLEELKMFVENQQADLVIVNDELTGTQIKNLEDALGVKIVDRTNLILDIFAKRARSKEGMLQVELAQLKYRLPRLVGLGGQLSRLGGGIGTRGPGETKLEVDRRHIRNRIKAIEEKLEELEKHRNLQRQRRKKNQIPVVAIVGYTNAGKSTLLNALTGADAYVEDKLFATLDPTARKLVLPSGREVILTDTVGFIRKLPHDLVEAFKSTLEEVKYADLLLHVIDVTSPDMDEKIKVVEKVLSDLGAIETPRINVYNKIDLLEIVPSGNNRDIYISAKNKIGLDRLLEAIERELFKETEVVSFLFPYEKTREYNYLKERGKVIEEDFDEKGISVKAEVTCEIKERLRNFIIS.

The region spanning 214–374 (PVVAIVGYTN…AIERELFKET (161 aa)) is the Hflx-type G domain. GTP contacts are provided by residues 220 to 227 (GYTNAGKS), 245 to 249 (FATLD), 267 to 270 (DTVG), 333 to 336 (NKID), and 352 to 354 (SAK). The Mg(2+) site is built by Ser-227 and Thr-247.

The protein belongs to the TRAFAC class OBG-HflX-like GTPase superfamily. HflX GTPase family. Monomer. Associates with the 50S ribosomal subunit. Requires Mg(2+) as cofactor.

It localises to the cytoplasm. Its function is as follows. GTPase that associates with the 50S ribosomal subunit and may have a role during protein synthesis or ribosome biogenesis. This Caldanaerobacter subterraneus subsp. tengcongensis (strain DSM 15242 / JCM 11007 / NBRC 100824 / MB4) (Thermoanaerobacter tengcongensis) protein is GTPase HflX.